A 206-amino-acid chain; its full sequence is Small ribosomal subunit protein uS4 (206 aa).

One can recognise an S4 RNA-binding domain in the interval 94–157 (RRLDNVVYRL…RSRTYFKNLV (64 aa)).

Belongs to the universal ribosomal protein uS4 family. In terms of assembly, part of the 30S ribosomal subunit. Contacts protein S5. The interaction surface between S4 and S5 is involved in control of translational fidelity.

One of the primary rRNA binding proteins, it binds directly to 16S rRNA where it nucleates assembly of the body of the 30S subunit. Its function is as follows. With S5 and S12 plays an important role in translational accuracy. The chain is Small ribosomal subunit protein uS4 from Chloroflexus aurantiacus (strain ATCC 29364 / DSM 637 / Y-400-fl).